The following is a 121-amino-acid chain: HTH-type transcriptional regulator Rv1152 (121 aa).

The HTH gntR-type domain maps to 15–83 (KPLFDQLRTQ…GRFGTFISRF (69 aa)). The H-T-H motif DNA-binding region spans 43 to 62 (VRDLAGQLGVAANTVARAYR).

It is found in the cytoplasm. The protein localises to the secreted. It localises to the cell wall. In terms of biological role, transcriptional regulator that modulates resistance to vancomycin and aminoglycosides. Negatively regulates the expression of several genes responsive to vancomycin, resulting in decreased susceptibility of bacteria to vancomycin. Negatively regulates the expression of genes encoding the ribosome binding protein Hsp, the small subunit of sulfate adenylyltransferase CysD, the L-lysine-epsilon aminotransferase LAT and the protease HtpX. Also modulates purine metabolism and aminoglycoside antibiotic resistance. Negatively regulates the expression of purine metabolism-related genes and the accumulation of purine metabolites, which affects aminoglycoside antibiotic resistance. The chain is HTH-type transcriptional regulator Rv1152 from Mycobacterium tuberculosis (strain ATCC 25618 / H37Rv).